The primary structure comprises 207 residues: Protein phosphatase inhibitor 2 (207 aa).

Disordered regions lie at residues 1-44 (MAAS…SKKS), 65-97 (LMKI…ALTP), and 110-146 (ESLE…EMKR). An N-acetylalanine modification is found at alanine 2. The interval 12-17 (KGILKN) is required for binding PPP1CC. The segment covering 19–28 (SSTTSSVVST) has biased composition (low complexity). Residues 35-44 (SVDEELSKKS) are compositionally biased toward basic and acidic residues. The segment at 43–55 (KSQKWDEMSILAT) is required for binding PPP1CC. Serine 44 carries the post-translational modification Phosphoserine; by ATM. Threonine 73 is modified (phosphothreonine; by GSK3). Positions 80–91 (ADDEDALSDSET) are enriched in acidic residues. Phosphoserine occurs at positions 87 and 89. Residues threonine 92 and threonine 96 each carry the phosphothreonine modification. A compositionally biased stretch (basic and acidic residues) spans 112-122 (LEPKYRVREQE). A phosphoserine mark is found at serine 123, serine 124, serine 129, and serine 132. Over residues 123 to 132 (SSGDEDSDLS) the composition is skewed to acidic residues. Over residues 133–145 (PEEREKKRQFEMK) the composition is skewed to basic and acidic residues. Positions 149–152 (HYNE) are required for binding PPP1CC catalytic center, displacing metal ions and inhibition of PPP1CC catalytic activity. The tract at residues 165–207 (KDLNDEEEDEEMSETAAGESMNMEESSQGSATSDQLQNKSQSS) is disordered. Acidic residues predominate over residues 168-177 (NDEEEDEEMS). The segment covering 187–207 (MEESSQGSATSDQLQNKSQSS) has biased composition (polar residues).

It belongs to the protein phosphatase inhibitor 2 family. In terms of assembly, heterodimer with PP1. Post-translationally, phosphorylation on Ser-44 by ATM activates PP1 by dissociating the PP1-PPP1R2 complex. Phosphorylation on Thr-73 by GSK3 activates PP1 by dissociating the PP1-PPP1R2 complex.

Functionally, inhibitor of protein-phosphatase 1. The chain is Protein phosphatase inhibitor 2 (PPP1R2) from Bos taurus (Bovine).